The primary structure comprises 173 residues: Crossover junction endodeoxyribonuclease RuvC (173 aa).

Residues aspartate 8, glutamate 67, and aspartate 139 contribute to the active site. Mg(2+)-binding residues include aspartate 8, glutamate 67, and aspartate 139.

The protein belongs to the RuvC family. Homodimer which binds Holliday junction (HJ) DNA. The HJ becomes 2-fold symmetrical on binding to RuvC with unstacked arms; it has a different conformation from HJ DNA in complex with RuvA. In the full resolvosome a probable DNA-RuvA(4)-RuvB(12)-RuvC(2) complex forms which resolves the HJ. The cofactor is Mg(2+).

The protein resides in the cytoplasm. The enzyme catalyses Endonucleolytic cleavage at a junction such as a reciprocal single-stranded crossover between two homologous DNA duplexes (Holliday junction).. Its function is as follows. The RuvA-RuvB-RuvC complex processes Holliday junction (HJ) DNA during genetic recombination and DNA repair. Endonuclease that resolves HJ intermediates. Cleaves cruciform DNA by making single-stranded nicks across the HJ at symmetrical positions within the homologous arms, yielding a 5'-phosphate and a 3'-hydroxyl group; requires a central core of homology in the junction. The consensus cleavage sequence is 5'-(A/T)TT(C/G)-3'. Cleavage occurs on the 3'-side of the TT dinucleotide at the point of strand exchange. HJ branch migration catalyzed by RuvA-RuvB allows RuvC to scan DNA until it finds its consensus sequence, where it cleaves and resolves the cruciform DNA. The polypeptide is Crossover junction endodeoxyribonuclease RuvC (Shigella flexneri serotype 5b (strain 8401)).